We begin with the raw amino-acid sequence, 957 residues long: Melanoma-associated antigen E1 (957 aa).

Residues 1–455 (MSLVSQNSRR…DSEGPKGAEG (455 aa)) form a disordered region. Composition is skewed to polar residues over residues 85–96 (SEASSASGQPTI) and 104–130 (VLPT…SVTL). Over residues 138 to 162 (TSRPPTSSEEPSTSVPPTASEVPST) the composition is skewed to low complexity. Polar residues-rich tracts occupy residues 219-244 (GLST…TEGL), 268-320 (PSTS…STSV), 329-344 (STSV…STSV), 364-380 (LSTS…DTSV), and 414-428 (TLFS…NPSK). 2 MAGE domains span residues 491–690 (MEQN…YNEA) and 745–936 (LESK…YREA). Positions 743 to 957 (SRLESKARKL…HRQIFVHNFR (215 aa)) are interaction with DTNA.

As to quaternary structure, interacts with DTNA. Interacts with TRIM28.

The protein localises to the cytoplasm. The protein resides in the perinuclear region. It is found in the nucleus. Its subcellular location is the cell membrane. In terms of biological role, may enhance ubiquitin ligase activity of RING-type zinc finger-containing E3 ubiquitin-protein ligases. Proposed to act through recruitment and/or stabilization of the Ubl-conjugating enzyme (E2) at the E3:substrate complex. In Homo sapiens (Human), this protein is Melanoma-associated antigen E1 (MAGEE1).